The primary structure comprises 206 residues: Large ribosomal subunit protein uL4 (206 aa).

Residues G46–T77 form a disordered region. Basic residues predominate over residues H58 to G70.

This sequence belongs to the universal ribosomal protein uL4 family. In terms of assembly, part of the 50S ribosomal subunit.

Functionally, one of the primary rRNA binding proteins, this protein initially binds near the 5'-end of the 23S rRNA. It is important during the early stages of 50S assembly. It makes multiple contacts with different domains of the 23S rRNA in the assembled 50S subunit and ribosome. In terms of biological role, forms part of the polypeptide exit tunnel. This Polaromonas naphthalenivorans (strain CJ2) protein is Large ribosomal subunit protein uL4.